We begin with the raw amino-acid sequence, 194 residues long: dCTP deaminase (194 aa).

Residues Arg-110–Arg-115, Asp-128, Val-136–Glu-138, Tyr-171, Lys-178, and Gln-182 each bind dCTP. Glu-138 serves as the catalytic Proton donor/acceptor. Residues Arg-174 to Lys-194 are disordered.

It belongs to the dCTP deaminase family. As to quaternary structure, homotrimer.

The enzyme catalyses dCTP + H2O + H(+) = dUTP + NH4(+). Its pathway is pyrimidine metabolism; dUMP biosynthesis; dUMP from dCTP (dUTP route): step 1/2. Catalyzes the deamination of dCTP to dUTP. The sequence is that of dCTP deaminase from Shewanella frigidimarina (strain NCIMB 400).